A 277-amino-acid chain; its full sequence is Methylamine utilization protein MauF (277 aa).

Helical transmembrane passes span 33 to 53 (IAVL…LASA), 59 to 79 (LWAV…WSPC), 111 to 131 (YGLG…IAGF), 132 to 152 (SGFG…YGAH), 179 to 199 (WVIG…YVQT), 205 to 225 (MTLA…VALF), and 257 to 277 (ALAD…LALI).

The protein resides in the cell membrane. It participates in one-carbon metabolism; methylamine degradation. The sequence is that of Methylamine utilization protein MauF (mauF) from Paracoccus denitrificans.